The chain runs to 34 residues: Mu-theraphotoxin-Df1a (34 aa).

3 disulfides stabilise this stretch: C2–C16, C9–C21, and C15–C28. Residue F34 is modified to Phenylalanine amide.

The protein belongs to the neurotoxin 10 (Hwtx-1) family. 54 (ProTx-1) subfamily. C-terminal amidation is important for the high potency of the toxin. Expressed by the venom gland.

It is found in the secreted. Functionally, inhibits sodium channel Nav1.7/SCN9A with high potency (IC(50)=117 nM) and Nav1.2/SCN2A, Nav1.3/SCN3A, Nav1.6/SCN8A and Nav1.5/SCN5 with weaker potency. Also inhibits voltage-gated calcium channel Cav3.1/CACNA1G, Cav3.2/CACNA1H and Cav3.3/CACNA1I. The sequence is that of Mu-theraphotoxin-Df1a from Davus fasciatus (Costa Rican tiger rump).